Here is a 538-residue protein sequence, read N- to C-terminus: Cytochrome P450 monooxygenase verH (538 aa).

The chain crosses the membrane as a helical span at residues 2–21 (VFAMLVVCWSIFLGLWMLVS). A heme-binding site is contributed by cysteine 445.

It belongs to the cytochrome P450 family. Heme serves as cofactor.

It localises to the membrane. Its pathway is secondary metabolite biosynthesis; terpenoid biosynthesis. It participates in mycotoxin biosynthesis. In terms of biological role, cytochrome P450 monooxygenase; part of the gene cluster that mediates the biosynthesis of the neurotoxin verrucosidin, a methylated alpha-pyrone polyketide that inhibits oxidative phosphorylation in mitochondria and thereby causes neurological diseases. The carbon backbone of verrucosidin is synthesized by the HR-PKS verA, and further modified by the other verrucodidin cluster enzymes. The polypeptide is Cytochrome P450 monooxygenase verH (Penicillium polonicum).